The sequence spans 449 residues: Trigger factor (449 aa).

Positions Thr-160 to Gln-231 constitute a PPIase FKBP-type domain. The segment at Gly-411 to Glu-449 is disordered. The span at Ala-415 to Ala-443 shows a compositional bias: low complexity.

The protein belongs to the FKBP-type PPIase family. Tig subfamily.

The protein resides in the cytoplasm. The enzyme catalyses [protein]-peptidylproline (omega=180) = [protein]-peptidylproline (omega=0). Its function is as follows. Involved in protein export. Acts as a chaperone by maintaining the newly synthesized protein in an open conformation. Functions as a peptidyl-prolyl cis-trans isomerase. This chain is Trigger factor, found in Deinococcus geothermalis (strain DSM 11300 / CIP 105573 / AG-3a).